Here is a 1051-residue protein sequence, read N- to C-terminus: Serine/threonine-protein kinase ULK1 (1051 aa).

The 263-residue stretch at 16–278 (FSRKDLIGHG…FDEFFHHPFL (263 aa)) folds into the Protein kinase domain. ATP contacts are provided by residues 22 to 30 (IGHGAFAVV) and lysine 46. Residue aspartate 138 is the Proton acceptor of the active site. The residue at position 162 (lysine 162) is an N6-acetyllysine. Disordered stretches follow at residues 283–323 (PIKK…EMPQ), 335–358 (AGFLQGSRDSGGSSKDSCDTDDFV), and 394–554 (GLES…CRLH). An interaction with GABARAP and GABARAPL2 region spans residues 287–416 (SPPVPVPSYP…TCSSSPSPSG (130 aa)). Composition is skewed to low complexity over residues 295 to 318 (YPSSGSGSSSSSSSASHLASPPSL), 340 to 349 (GSRDSGGSSK), and 400 to 423 (RTPSPSPTCSSSPSPSGRPGPFSS). Position 317 is a phosphoserine; by AMPK (serine 317). Residues serine 403 and serine 450 each carry the phosphoserine modification. Residues 437-459 (QVHNYQRIEQNLQSPTQQQTARS) are compositionally biased toward polar residues. Threonine 456 is modified (phosphothreonine). Phosphoserine is present on residues serine 467, serine 477, serine 479, and serine 521. The residue at position 555 (serine 555) is a Phosphoserine; by AMPK. Residue threonine 574 is modified to Phosphothreonine. Lysine 606 bears the N6-acetyllysine mark. The residue at position 635 (threonine 635) is a Phosphothreonine. Serine 637 bears the Phosphoserine; by AMPK mark. Serine 638 is subject to Phosphoserine. Disordered regions lie at residues 661–686 (PDLSEASPFHGQQLGSGLRPAEDTRG) and 727–787 (APSA…TGSS). A compositionally biased stretch (gly residues) spans 731-745 (GFGGTLHPGARGGGA). Serine 757 bears the Phosphoserine; by MTOR mark. Residue serine 774 is modified to Phosphoserine. Residues 774 to 787 (SVGSSSSLGSTGSS) show a composition bias toward low complexity. Serine 777 is subject to Phosphoserine; by AMPK. Residues 829-1051 (PDLPEETLME…LSALLSGVYA (223 aa)) form a C-terminal domain; mediates interaction with SESN2 region.

The protein belongs to the protein kinase superfamily. Ser/Thr protein kinase family. APG1/unc-51/ULK1 subfamily. Interacts with GABARAP and GABARAPL2. Interacts (via C-terminus) with ATG13. Part of a complex consisting of ATG13, ATG101, ULK1 and RB1CC1. Associates with the mammalian target of rapamycin complex 1 (mTORC1) through an interaction with RPTOR; the association depends on nutrient conditions and is reduced during starvation. Interacts with FEZ1; SCOC interferes with FEZ1-binding. Interacts with TBC1D14. Interacts (phosphorylated form) with TRIM5. When phosphorylated at Ser-317, interacts with MEFV and BECN1 simultaneously. Interacts with TRIM21 and IRF3, in the presence of TRIM21. Interacts with SESN2. Interacts with SQSTM1. Interacts with C9orf72. Interacts with WDR45. Interacts with ATG13; this interaction is increased in the absence of TMEM39A. Interacts with WIPI2. Interacts with ATP2A2. Interacts with AMBRA1. Interacts with Irgm1; promoting the coassembly of ULK1 and BECN1. In terms of processing, autophosphorylated. Phosphorylated under nutrient-rich conditions; dephosphorylated during starvation or following treatment with rapamycin. In response to nutrient limitation, phosphorylated and activated by AMPK, leading to activate autophagy. Under nutrient sufficiency, phosphorylated by MTOR/mTOR, disrupting the interaction with AMPK and preventing activation of ULK1. Post-translationally, ubiquitinated via 'Lys-63'-linkage by a complex composed of AMBRA1 and TRAF6 following autophagy induction, promoting ULK1 stability and kinase activity. Deubiquitinated by USP20; leading to ULK1 stability and autophagy initiation. Acetylated by KAT5/TIP60 under autophagy induction, promoting protein kinase activity.

Its subcellular location is the cytoplasm. The protein resides in the cytosol. The protein localises to the preautophagosomal structure. It catalyses the reaction L-seryl-[protein] + ATP = O-phospho-L-seryl-[protein] + ADP + H(+). The enzyme catalyses L-threonyl-[protein] + ATP = O-phospho-L-threonyl-[protein] + ADP + H(+). Its activity is regulated as follows. Acetylation by KAT5/TIP60 stimulates the protein kinase activity. The protein kinase activity is activated by unanchored 'Lys-63'-linked polyubiquitin chains: unanchored 'Lys-63'-linked polyubiquitin chains are catalyzed by TRIM32 in an AMBRA1-dependent manner. Functionally, serine/threonine-protein kinase involved in autophagy in response to starvation. Acts upstream of phosphatidylinositol 3-kinase PIK3C3 to regulate the formation of autophagophores, the precursors of autophagosomes. Part of regulatory feedback loops in autophagy: acts both as a downstream effector and negative regulator of mammalian target of rapamycin complex 1 (mTORC1) via interaction with RPTOR. Activated via phosphorylation by AMPK and also acts as a regulator of AMPK by mediating phosphorylation of AMPK subunits PRKAA1, PRKAB2 and PRKAG1, leading to negatively regulate AMPK activity. May phosphorylate ATG13/KIAA0652 and RPTOR; however such data need additional evidences. Plays a role early in neuronal differentiation and is required for granule cell axon formation. Also phosphorylates SESN2 and SQSTM1 to regulate autophagy. Phosphorylates FLCN, promoting autophagy. Phosphorylates AMBRA1 in response to autophagy induction, releasing AMBRA1 from the cytoskeletal docking site to induce autophagosome nucleation. Phosphorylates ATG4B, leading to inhibit autophagy by decreasing both proteolytic activation and delipidation activities of ATG4B. This chain is Serine/threonine-protein kinase ULK1 (Ulk1), found in Mus musculus (Mouse).